Here is a 79-residue protein sequence, read N- to C-terminus: Small ribosomal subunit protein eS17 (79 aa).

The protein belongs to the eukaryotic ribosomal protein eS17 family.

This chain is Small ribosomal subunit protein eS17, found in Saccharolobus solfataricus (strain ATCC 35092 / DSM 1617 / JCM 11322 / P2) (Sulfolobus solfataricus).